Consider the following 865-residue polypeptide: Envelope glycoprotein gp160 (865 aa).

The signal sequence occupies residues 1 to 20 (MRYTIITLGIIVIGIGIVLS). Topologically, residues 21-705 (KQWITVFYGI…SKWLNILKMG (685 aa)) are extracellular. The N-linked (GlcNAc...) asparagine; by host glycan is linked to asparagine 35. An intrachain disulfide couples cysteine 42 to cysteine 55. Asparagine 68, asparagine 117, asparagine 150, asparagine 165, asparagine 195, asparagine 198, asparagine 210, asparagine 252, asparagine 255, asparagine 266, asparagine 276, asparagine 282, asparagine 294, asparagine 306, asparagine 316, asparagine 373, asparagine 414, asparagine 451, asparagine 488, and asparagine 491 each carry an N-linked (GlcNAc...) asparagine; by host glycan. Cystine bridges form between cysteine 101–cysteine 218, cysteine 108–cysteine 209, cysteine 113–cysteine 166, cysteine 231–cysteine 261, and cysteine 241–cysteine 253. The tract at residues 113–165 (CVELNSTRERATTPTTTPKSTGLPCVGPTSGENLQSCNASIIEREMEDEPASN) is V1. The interval 166–209 (CTFAMAGYVRDQKKNYYSVVWNDAEIYCKNKTNSTSKECYMIHC) is V2. The tract at residues 311-343 (CRRPGNKTVLPVTIMAGLVFHSQKYNMKLRQAW) is V3. A disulfide bridge links cysteine 311 with cysteine 344. Cysteine 396 and cysteine 471 are joined by a disulfide. Positions 403–444 (CKMDWFLNYLNNKTWDAYHNFCSSKKKGHAPGPCVQRTYVAY) are V4. The V5 stretch occupies residues 487–494 (KNRTNVTL). The segment at 537–557 (VPFVLGFLGFLGAAGTAMGAA) is fusion peptide. Positions 600-616 (LNARVTALEKYLEDQAR) are immunosuppression. Asparagine 645 and asparagine 661 each carry an N-linked (GlcNAc...) asparagine; by host glycan. The stretch at 650–675 (EWERQIADLESNITGQLVKAREQEEK) forms a coiled coil. The segment at 682–703 (KLTSWSDFWSWFDFSKWLNILK) is MPER; binding to GalCer. Residues 706–726 (FLVIVGIIGLRLLYTVYGCIV) traverse the membrane as a helical segment. The Cytoplasmic portion of the chain corresponds to 727 to 865 (RVRQGYVPLS…VRQGLEEILN (139 aa)). The YXXL motif; contains endocytosis signal signature appears at 732-735 (YVPL). The tract at residues 744–763 (VGKGRPDNADEPGEGGDNSR) is disordered.

In terms of assembly, the mature envelope protein (Env) consists of a homotrimer of non-covalently associated gp120-gp41 heterodimers. The resulting complex protrudes from the virus surface as a spike. Interacts with host CD4 and CCR5. Gp120 also interacts with the C-type lectins CD209/DC-SIGN and CLEC4M/DC-SIGNR (collectively referred to as DC-SIGN(R)). The mature envelope protein (Env) consists of a homotrimer of non-covalently associated gp120-gp41 heterodimers. The resulting complex protrudes from the virus surface as a spike. Post-translationally, specific enzymatic cleavages in vivo yield mature proteins. Envelope glycoproteins are synthesized as an inactive precursor that is heavily N-glycosylated and processed likely by host cell furin in the Golgi to yield the mature SU and TM proteins. The cleavage site between SU and TM requires the minimal sequence [KR]-X-[KR]-R.

It localises to the virion membrane. Its subcellular location is the host cell membrane. The protein resides in the host endosome membrane. In terms of biological role, the surface protein gp120 (SU) attaches the virus to the host lymphoid cell by binding to the primary receptor CD4. This interaction induces a structural rearrangement creating a high affinity binding site for a chemokine coreceptor like CCR5. This peculiar 2 stage receptor-interaction strategy allows gp120 to maintain the highly conserved coreceptor-binding site in a cryptic conformation, protected from neutralizing antibodies. These changes are transmitted to the transmembrane protein gp41 and are thought to activate its fusogenic potential by unmasking its fusion peptide. Its function is as follows. Surface protein gp120 (SU) may target the virus to gut-associated lymphoid tissue (GALT) by binding host ITGA4/ITGB7 (alpha-4/beta-7 integrins), a complex that mediates T-cell migration to the GALT. Interaction between gp120 and ITGA4/ITGB7 would allow the virus to enter GALT early in the infection, infecting and killing most of GALT's resting CD4+ T-cells. This T-cell depletion is believed to be the major insult to the host immune system leading to AIDS. Functionally, the surface protein gp120 is a ligand for CD209/DC-SIGN and CLEC4M/DC-SIGNR, which are respectively found on dendritic cells (DCs), and on endothelial cells of liver sinusoids and lymph node sinuses. These interactions allow capture of viral particles at mucosal surfaces by these cells and subsequent transmission to permissive cells. DCs are professional antigen presenting cells, critical for host immunity by inducing specific immune responses against a broad variety of pathogens. They act as sentinels in various tissues where they take up antigen, process it, and present it to T-cells following migration to lymphoid organs. SIV subverts the migration properties of dendritic cells to gain access to CD4+ T-cells in lymph nodes. Virus transmission to permissive T-cells occurs either in trans (without DCs infection, through viral capture and transmission), or in cis (following DCs productive infection, through the usual CD4-gp120 interaction), thereby inducing a robust infection. In trans infection, bound virions remain infectious over days and it is proposed that they are not degraded, but protected in non-lysosomal acidic organelles within the DCs close to the cell membrane thus contributing to the viral infectious potential during DCs' migration from the periphery to the lymphoid tissues. On arrival at lymphoid tissues, intact virions recycle back to DCs' cell surface allowing virus transmission to CD4+ T-cells. Virion capture also seems to lead to MHC-II-restricted viral antigen presentation, and probably to the activation of SIV-specific CD4+ cells. The transmembrane protein gp41 (TM) acts as a class I viral fusion protein. Under the current model, the protein has at least 3 conformational states: pre-fusion native state, pre-hairpin intermediate state, and post-fusion hairpin state. During fusion of viral and target intracellular membranes, the coiled coil regions (heptad repeats) assume a trimer-of-hairpins structure, positioning the fusion peptide in close proximity to the C-terminal region of the ectodomain. The formation of this structure appears to drive apposition and subsequent fusion of viral and target cell membranes. Complete fusion occurs in host cell endosomes. The virus undergoes clathrin-dependent internalization long before endosomal fusion, thus minimizing the surface exposure of conserved viral epitopes during fusion and reducing the efficacy of inhibitors targeting these epitopes. Membranes fusion leads to delivery of the nucleocapsid into the cytoplasm. In terms of biological role, the envelope glycoprotein gp160 precursor down-modulates cell surface CD4 antigen by interacting with it in the endoplasmic reticulum and blocking its transport to the cell surface. Its function is as follows. The gp120-gp41 heterodimer allows rapid transcytosis of the virus through CD4 negative cells such as simple epithelial monolayers of the intestinal, rectal and endocervical epithelial barriers. Both gp120 and gp41 specifically recognize glycosphingolipids galactosyl-ceramide (GalCer) or 3' sulfo-galactosyl-ceramide (GalS) present in the lipid rafts structures of epithelial cells. Binding to these alternative receptors allows the rapid transcytosis of the virus through the epithelial cells. This transcytotic vesicle-mediated transport of virions from the apical side to the basolateral side of the epithelial cells does not involve infection of the cells themselves. The sequence is that of Envelope glycoprotein gp160 (env) from Simian immunodeficiency virus agm.vervet (isolate AGM TYO-1) (SIV-agm.ver).